A 366-amino-acid chain; its full sequence is Carbamoyl phosphate synthase small chain (366 aa).

Residues M1 to D171 form a CPSase region. 3 residues coordinate L-glutamine: S47, G221, and G223. The Glutamine amidotransferase type-1 domain maps to S173 to K360. C248 (nucleophile) is an active-site residue. The L-glutamine site is built by L249, Q252, N290, G292, and Y293. Catalysis depends on residues H333 and E335.

The protein belongs to the CarA family. Composed of two chains; the small (or glutamine) chain promotes the hydrolysis of glutamine to ammonia, which is used by the large (or ammonia) chain to synthesize carbamoyl phosphate. Tetramer of heterodimers (alpha,beta)4.

It catalyses the reaction hydrogencarbonate + L-glutamine + 2 ATP + H2O = carbamoyl phosphate + L-glutamate + 2 ADP + phosphate + 2 H(+). It carries out the reaction L-glutamine + H2O = L-glutamate + NH4(+). It participates in amino-acid biosynthesis; L-arginine biosynthesis; carbamoyl phosphate from bicarbonate: step 1/1. The protein operates within pyrimidine metabolism; UMP biosynthesis via de novo pathway; (S)-dihydroorotate from bicarbonate: step 1/3. In terms of biological role, small subunit of the glutamine-dependent carbamoyl phosphate synthetase (CPSase). CPSase catalyzes the formation of carbamoyl phosphate from the ammonia moiety of glutamine, carbonate, and phosphate donated by ATP, constituting the first step of 2 biosynthetic pathways, one leading to arginine and/or urea and the other to pyrimidine nucleotides. The small subunit (glutamine amidotransferase) binds and cleaves glutamine to supply the large subunit with the substrate ammonia. This Staphylococcus aureus (strain COL) protein is Carbamoyl phosphate synthase small chain.